A 160-amino-acid chain; its full sequence is 6,7-dimethyl-8-ribityllumazine synthase (160 aa).

5-amino-6-(D-ribitylamino)uracil contacts are provided by residues W27, 59–61 (AIE), and 81–83 (VVI). Position 86 to 87 (86 to 87 (DT)) interacts with (2S)-2-hydroxy-3-oxobutyl phosphate. H89 (proton donor) is an active-site residue. N114 lines the 5-amino-6-(D-ribitylamino)uracil pocket. R128 contributes to the (2S)-2-hydroxy-3-oxobutyl phosphate binding site.

Belongs to the DMRL synthase family. As to quaternary structure, homopentamer.

It catalyses the reaction (2S)-2-hydroxy-3-oxobutyl phosphate + 5-amino-6-(D-ribitylamino)uracil = 6,7-dimethyl-8-(1-D-ribityl)lumazine + phosphate + 2 H2O + H(+). Its pathway is cofactor biosynthesis; riboflavin biosynthesis; riboflavin from 2-hydroxy-3-oxobutyl phosphate and 5-amino-6-(D-ribitylamino)uracil: step 1/2. Its function is as follows. Catalyzes the formation of 6,7-dimethyl-8-ribityllumazine by condensation of 5-amino-6-(D-ribitylamino)uracil with 3,4-dihydroxy-2-butanone 4-phosphate. This is the penultimate step in the biosynthesis of riboflavin. This chain is 6,7-dimethyl-8-ribityllumazine synthase, found in Mycobacterium leprae (strain Br4923).